The primary structure comprises 140 residues: Actin-depolymerizing factor 10 (140 aa).

Phosphoserine is present on serine 6. Residues 7-139 (GMHVSDECKL…SLDIIKGRVN (133 aa)) form the ADF-H domain.

Belongs to the actin-binding proteins ADF family.

It is found in the cytoplasm. The protein localises to the cytoskeleton. Actin-depolymerizing protein. Severs actin filaments (F-actin) and binds to actin monomers. In Arabidopsis thaliana (Mouse-ear cress), this protein is Actin-depolymerizing factor 10 (ADF10).